Reading from the N-terminus, the 697-residue chain is Methionine--tRNA ligase (697 aa).

The 'HIGH' region motif lies at P11–H21. 4 residues coordinate Zn(2+): C142, C145, C155, and C158. The short motif at K343 to S347 is the 'KMSKS' region element. Position 346 (K346) interacts with ATP. Positions D595–A697 constitute a tRNA-binding domain.

Belongs to the class-I aminoacyl-tRNA synthetase family. MetG type 1 subfamily. As to quaternary structure, homodimer. Requires Zn(2+) as cofactor.

The protein localises to the cytoplasm. It catalyses the reaction tRNA(Met) + L-methionine + ATP = L-methionyl-tRNA(Met) + AMP + diphosphate. Is required not only for elongation of protein synthesis but also for the initiation of all mRNA translation through initiator tRNA(fMet) aminoacylation. The chain is Methionine--tRNA ligase from Psychrobacter sp. (strain PRwf-1).